An 80-amino-acid polypeptide reads, in one-letter code: DNA-directed RNA polymerase RPB10 homolog (80 aa).

Residues Cys-7, Cys-10, Cys-65, and Cys-66 each coordinate Zn(2+).

Belongs to the archaeal RpoN/eukaryotic RPB10 RNA polymerase subunit family. As to quaternary structure, part of the viral DNA-directed RNA polymerase that consists of 8 polII-like subunits (RPB1, RPB2, RPB3, RPB5, RPB6, RPB7, RPB9, RPB10), a capping enzyme and a termination factor.

The protein localises to the host cytoplasm. Its function is as follows. Component of the DNA-directed RNA polymerase (RNAP) that catalyzes the transcription in the cytoplasm of viral DNA into RNA using the four ribonucleoside triphosphates as substrates. The sequence is that of DNA-directed RNA polymerase RPB10 homolog from African swine fever virus (isolate Pig/Kenya/KEN-50/1950) (ASFV).